A 186-amino-acid polypeptide reads, in one-letter code: Large ribosomal subunit protein uL10 (186 aa).

The protein belongs to the universal ribosomal protein uL10 family. As to quaternary structure, part of the ribosomal stalk of the 50S ribosomal subunit. The N-terminus interacts with L11 and the large rRNA to form the base of the stalk. The C-terminus forms an elongated spine to which L12 dimers bind in a sequential fashion forming a multimeric L10(L12)X complex.

Forms part of the ribosomal stalk, playing a central role in the interaction of the ribosome with GTP-bound translation factors. The sequence is that of Large ribosomal subunit protein uL10 from Rhodococcus jostii (strain RHA1).